The chain runs to 290 residues: Uridine diphosphate glucose pyrophosphatase NUDT22 (290 aa).

Substrate-binding residues include phenylalanine 56, tyrosine 87, arginine 139, alanine 144, aspartate 151, histidine 156, and glutamate 158. The Nudix hydrolase domain occupies 118–285; that stretch reads ADPLGVGAAL…KGAIFLYNRV (168 aa). The short motif at 175–196 is the Nudix box element; that stretch reads GELVVHELFSSVLQEICDEVNV. Glutamate 189 and glutamate 193 together coordinate Mg(2+). A substrate-binding site is contributed by serine 274.

This sequence belongs to the Nudix family. It depends on Mg(2+) as a cofactor.

The enzyme catalyses UDP-sugar + H2O = UMP + alpha-D-aldose 1-phosphate.. In terms of biological role, hydrolyzes UDP-glucose to glucose 1-phosphate and UMP and UDP-galactose to galactose 1-phosphate and UMP. Preferred substrate is UDP-glucose. In Bos taurus (Bovine), this protein is Uridine diphosphate glucose pyrophosphatase NUDT22 (NUDT22).